The following is a 400-amino-acid chain: NAD-dependent protein deacetylase sirtuin-7 (400 aa).

The segment at 1 to 27 is disordered; it reads MAAGGLSRSERKAAERVRRLREEQQRE. Basic and acidic residues predominate over residues 8–27; the sequence is RSERKAAERVRRLREEQQRE. In terms of domain architecture, Deacetylase sirtuin-type spans 82 to 329; the sequence is PEELRGKVRE…RLLMAELGLE (248 aa). NAD(+)-binding positions include 107 to 126 and 167 to 170; these read GAGI…NGVW and QNCD. The active-site Proton acceptor is His-187. Cys-195, Cys-198, Cys-225, and Cys-228 together coordinate Zn(2+). NAD(+) contacts are provided by residues 268–270, 297–299, and Cys-315; these read GSS and NLQ. The segment at 354 to 380 is disordered; the sequence is SHSRKSLCRSREEAPPGDRGAPLSSAP. Residue Arg-388 is modified to Asymmetric dimethylarginine; alternate. Position 388 is an omega-N-methylarginine; alternate (Arg-388).

Belongs to the sirtuin family. Class IV subfamily. In terms of assembly, interacts with UBTF and the RNA polymerase I complex. Interacts with components of the B-WICH complex, such as MYBBP1A, SMARCA5/SNF2H and BAZ1B/WSTF. Interacts with ELK4, leading to stabilization at target promoters for H3K18Ac deacetylation. Interacts with histone H2A and/or histone H2B. Interacts with DNMT1. Interacts with SIRT1. Requires Zn(2+) as cofactor. In terms of processing, phosphorylated during mitosis. Post-translationally, methylation at Arg-388 by PRMT6 inhibits the H3K18Ac histone deacetylase activity, promoting mitochondria biogenesis and maintaining mitochondria respiration. Ubiquitinated via 'Lys-63'-linked ubiquitin chains. Deubiquitinated by USP7, inhibiting the H3K18Ac histone deacetylase activity and regulating gluconeogenesis. Ubiquitinated by E3 ubiquitin-protein ligase complex containing FBXO7; leading to proteasomal degradation.

The protein resides in the nucleus. Its subcellular location is the nucleolus. The protein localises to the nucleoplasm. It is found in the chromosome. It localises to the cytoplasm. It catalyses the reaction N(6)-acetyl-L-lysyl-[protein] + NAD(+) + H2O = 2''-O-acetyl-ADP-D-ribose + nicotinamide + L-lysyl-[protein]. The enzyme catalyses N(6)-glutaryl-L-lysyl-[protein] + NAD(+) + H2O = 2''-O-glutaryl-ADP-D-ribose + nicotinamide + L-lysyl-[protein]. The catalysed reaction is N(6)-succinyl-L-lysyl-[protein] + NAD(+) + H2O = 2''-O-succinyl-ADP-D-ribose + nicotinamide + L-lysyl-[protein]. It carries out the reaction N(6)-propanoyl-L-lysyl-[protein] + NAD(+) + H2O = 3''-O-propanoyl-ADP-D-ribose + nicotinamide + L-lysyl-[protein]. It catalyses the reaction N(6)-decanoyl-L-lysyl-[protein] + NAD(+) + H2O = 2''-O-decanoyl-ADP-D-ribose + nicotinamide + L-lysyl-[protein]. Its activity is regulated as follows. NAD-dependent protein-lysine deacetylase and deacylase activities are activated by nucleic acids. Histone deacetylase activity is activated by DNA and nucleosomes. Protein-lysine deacylase activity is activated by RNA. H3K18Ac histone deacetylase activity is inhibited by methylation at Arg-388. H3K18Ac histone deacetylase activity is inhibited by deubiquitination by USP7. Functionally, NAD-dependent protein-lysine deacylase that can act both as a deacetylase or deacylase (desuccinylase, depropionylase, deglutarylase and dedecanoylase), depending on the context. Specifically mediates deacetylation of histone H3 at 'Lys-18' (H3K18Ac). In contrast to other histone deacetylases, displays strong preference for a specific histone mark, H3K18Ac, directly linked to control of gene expression. H3K18Ac is mainly present around the transcription start site of genes and has been linked to activation of nuclear hormone receptors; SIRT7 thereby acts as a transcription repressor. Moreover, H3K18 hypoacetylation has been reported as a marker of malignancy in various cancers and seems to maintain the transformed phenotype of cancer cells. Also able to mediate deacetylation of histone H3 at 'Lys-36' (H3K36Ac) in the context of nucleosomes. Also mediates deacetylation of non-histone proteins, such as ATM, CDK9, DDX21, DDB1, FBL, FKBP5/FKBP51, GABPB1, RAN, RRP9/U3-55K and POLR1E/PAF53. Enriched in nucleolus where it stimulates transcription activity of the RNA polymerase I complex. Acts by mediating the deacetylation of the RNA polymerase I subunit POLR1E/PAF53, thereby promoting the association of RNA polymerase I with the rDNA promoter region and coding region. In response to metabolic stress, SIRT7 is released from nucleoli leading to hyperacetylation of POLR1E/PAF53 and decreased RNA polymerase I transcription. Required to restore the transcription of ribosomal RNA (rRNA) at the exit from mitosis. Promotes pre-ribosomal RNA (pre-rRNA) cleavage at the 5'-terminal processing site by mediating deacetylation of RRP9/U3-55K, a core subunit of the U3 snoRNP complex. Mediates 'Lys-37' deacetylation of Ran, thereby regulating the nuclear export of NF-kappa-B subunit RELA/p65. Acts as a regulator of DNA damage repair by mediating deacetylation of ATM during the late stages of DNA damage response, promoting ATM dephosphorylation and deactivation. Suppresses the activity of the DCX (DDB1-CUL4-X-box) E3 ubiquitin-protein ligase complexes by mediating deacetylation of DDB1, which prevents the interaction between DDB1 and CUL4 (CUL4A or CUL4B). Activates RNA polymerase II transcription by mediating deacetylation of CDK9, thereby promoting 'Ser-2' phosphorylation of the C-terminal domain (CTD) of RNA polymerase II. Deacetylates FBL, promoting histone-glutamine methyltransferase activity of FBL. Acts as a regulator of mitochondrial function by catalyzing deacetylation of GABPB1. Regulates Akt/AKT1 activity by mediating deacetylation of FKBP5/FKBP51. Required to prevent R-loop-associated DNA damage and transcription-associated genomic instability by mediating deacetylation and subsequent activation of DDX21, thereby overcoming R-loop-mediated stalling of RNA polymerases. In addition to protein deacetylase activity, also acts as a protein-lysine deacylase. Acts as a protein depropionylase by mediating depropionylation of Osterix (SP7), thereby regulating bone formation by osteoblasts. Acts as a histone deglutarylase by mediating deglutarylation of histone H4 on 'Lys-91' (H4K91glu); a mark that destabilizes nucleosomes by promoting dissociation of the H2A-H2B dimers from nucleosomes. Acts as a histone desuccinylase: in response to DNA damage, recruited to DNA double-strand breaks (DSBs) and catalyzes desuccinylation of histone H3 on 'Lys-122' (H3K122succ), thereby promoting chromatin condensation and DSB repair. Also promotes DSB repair by promoting H3K18Ac deacetylation, regulating non-homologous end joining (NHEJ). Along with its role in DNA repair, required for chromosome synapsis during prophase I of female meiosis by catalyzing H3K18Ac deacetylation. Involved in transcriptional repression of LINE-1 retrotransposon via H3K18Ac deacetylation, and promotes their association with the nuclear lamina. Required to stabilize ribosomal DNA (rDNA) heterochromatin and prevent cellular senescence induced by rDNA instability. Acts as a negative regulator of SIRT1 by preventing autodeacetylation of SIRT1, restricting SIRT1 deacetylase activity. The polypeptide is NAD-dependent protein deacetylase sirtuin-7 (Homo sapiens (Human)).